A 198-amino-acid polypeptide reads, in one-letter code: Imidazoleglycerol-phosphate dehydratase (198 aa).

It belongs to the imidazoleglycerol-phosphate dehydratase family.

The protein localises to the cytoplasm. The enzyme catalyses D-erythro-1-(imidazol-4-yl)glycerol 3-phosphate = 3-(imidazol-4-yl)-2-oxopropyl phosphate + H2O. It functions in the pathway amino-acid biosynthesis; L-histidine biosynthesis; L-histidine from 5-phospho-alpha-D-ribose 1-diphosphate: step 6/9. This is Imidazoleglycerol-phosphate dehydratase from Janthinobacterium sp. (strain Marseille) (Minibacterium massiliensis).